The following is a 172-amino-acid chain: MORN repeat-containing protein 5 (172 aa).

MORN repeat units lie at residues 8 to 30, 31 to 53, and 54 to 75; these read YIGE…TETK, YIGE…NGSR, and FDAV…DGLQ.

The protein resides in the cell projection. It is found in the cilium. It localises to the flagellum. This chain is MORN repeat-containing protein 5 (MORN5), found in Bos taurus (Bovine).